The chain runs to 400 residues: Methylthioribose kinase (400 aa).

Residues Asn-40, Lys-57, and 111–113 contribute to the ATP site; that span reads EDL. Asp-229 lines the substrate pocket. Residue 246–248 participates in ATP binding; sequence DAE. Position 344 (Arg-344) interacts with substrate.

Belongs to the methylthioribose kinase family. Homodimer.

It catalyses the reaction 5-(methylsulfanyl)-D-ribose + ATP = 5-(methylsulfanyl)-alpha-D-ribose 1-phosphate + ADP + H(+). It participates in amino-acid biosynthesis; L-methionine biosynthesis via salvage pathway; S-methyl-5-thio-alpha-D-ribose 1-phosphate from S-methyl-5'-thioadenosine (hydrolase route): step 2/2. In terms of biological role, catalyzes the phosphorylation of methylthioribose into methylthioribose-1-phosphate. This Pectobacterium carotovorum subsp. carotovorum (strain PC1) protein is Methylthioribose kinase.